Here is a 218-residue protein sequence, read N- to C-terminus: Large ribosomal subunit protein uL3 (218 aa).

This sequence belongs to the universal ribosomal protein uL3 family. In terms of assembly, part of the 50S ribosomal subunit. Forms a cluster with proteins L14 and L19.

Functionally, one of the primary rRNA binding proteins, it binds directly near the 3'-end of the 23S rRNA, where it nucleates assembly of the 50S subunit. The chain is Large ribosomal subunit protein uL3 from Mycolicibacterium gilvum (strain PYR-GCK) (Mycobacterium gilvum (strain PYR-GCK)).